A 105-amino-acid chain; its full sequence is Cuticle protein AMP2 (105 aa).

Residues 1–21 form a disordered region; the sequence is DRDAQTLTDERSDQGDGNFRY. The Chitin-binding type R&amp;R domain occupies 16-81; sequence DGNFRYEFET…PSSDLLPVGP (66 aa).

Arthrodial membrane.

In Homarus americanus (American lobster), this protein is Cuticle protein AMP2.